A 500-amino-acid chain; its full sequence is MELLAGTGLWPMAIFTVIFILLVDLMHRRQRWTSRYPPGPVPWPVLGNLLQVDLCNMPYSMYKLQNRYGDVFSLQMGWKPVVVINGLKAVQELLVTCGEDTADRPEMPIFQHIGYGHKAKGVVLAPYGPEWREQRRFSVSTLRNFGVGKKSLEQWVTDEASHLCDALTAEAGRPLDPYTLLNKAVCNVIASLIYARRFDYGDPDFIKVLKILKESMGEQTGLFPEVLNMFPVLLRIPGLADKVFPGQKTFLTMVDNLVTEHKKTWDPDQPPRDLTDAFLAEIEKAKGNPESSFNDANLRLVVNDLFGAGMVTTSITLTWALLLMILHPDVQCRVQQEIDEVIGQVRHPEMADQAHMPFTNAVIHEVQRFADIVPMNLPHKTSRDIEVQGFLIPKGTTLIPNLSSVLKDETVWEKPLRFHPEHFLDAQGNFVKHEAFMPFSAGRRACLGEPLARMELFLFFTCLLQRFSFSVPTGQPRPSDYGVFAFLLSPSPYQLCAFKR.

Position 446 (C446) interacts with heme.

The protein belongs to the cytochrome P450 family. Heme serves as cofactor.

Its subcellular location is the endoplasmic reticulum membrane. It is found in the microsome membrane. It catalyses the reaction an organic molecule + reduced [NADPH--hemoprotein reductase] + O2 = an alcohol + oxidized [NADPH--hemoprotein reductase] + H2O + H(+). Functionally, cytochromes P450 are a group of heme-thiolate monooxygenases. In liver microsomes, this enzyme is involved in an NADPH-dependent electron transport pathway. It oxidizes a variety of structurally unrelated compounds, including steroids, fatty acids, and xenobiotics. The polypeptide is Cytochrome P450 2D3 (Cyp2d3) (Rattus norvegicus (Rat)).